The primary structure comprises 421 residues: Probable acid phosphatase (421 aa).

Asp229 acts as the Proton donor in catalysis.

It carries out the reaction a phosphate monoester + H2O = an alcohol + phosphate. The protein is Probable acid phosphatase of Kluyveromyces lactis (strain ATCC 8585 / CBS 2359 / DSM 70799 / NBRC 1267 / NRRL Y-1140 / WM37) (Yeast).